The chain runs to 203 residues: Dephospho-CoA kinase (203 aa).

The 200-residue stretch at 4–203 folds into the DPCK domain; it reads VIGITGGIAT…EEGYIQSESE (200 aa). 12-17 contacts ATP; sequence ATGKST.

This sequence belongs to the CoaE family.

It is found in the cytoplasm. It catalyses the reaction 3'-dephospho-CoA + ATP = ADP + CoA + H(+). It functions in the pathway cofactor biosynthesis; coenzyme A biosynthesis; CoA from (R)-pantothenate: step 5/5. Functionally, catalyzes the phosphorylation of the 3'-hydroxyl group of dephosphocoenzyme A to form coenzyme A. The protein is Dephospho-CoA kinase of Staphylococcus epidermidis (strain ATCC 35984 / DSM 28319 / BCRC 17069 / CCUG 31568 / BM 3577 / RP62A).